The primary structure comprises 95 residues: Co-chaperonin GroES (95 aa).

The protein belongs to the GroES chaperonin family. As to quaternary structure, heptamer of 7 subunits arranged in a ring. Interacts with the chaperonin GroEL.

The protein localises to the cytoplasm. Its function is as follows. Together with the chaperonin GroEL, plays an essential role in assisting protein folding. The GroEL-GroES system forms a nano-cage that allows encapsulation of the non-native substrate proteins and provides a physical environment optimized to promote and accelerate protein folding. GroES binds to the apical surface of the GroEL ring, thereby capping the opening of the GroEL channel. The sequence is that of Co-chaperonin GroES from Streptococcus equi subsp. equi (strain 4047).